The primary structure comprises 491 residues: Ketol-acid reductoisomerase (NADP(+)) (491 aa).

Positions 17-208 constitute a KARI N-terminal Rossmann domain; sequence LGKCRFMSRD…GGHRAGVLES (192 aa). Residues 45-48, arginine 68, arginine 76, serine 78, and 108-110 each bind NADP(+); these read CGAQ and DKQ. Histidine 132 is an active-site residue. Glycine 158 lines the NADP(+) pocket. KARI C-terminal knotted domains follow at residues 209-344 and 345-484; these read SFVA…NYPE and YEGK…MTDM. Aspartate 217, glutamate 221, glutamate 389, and glutamate 393 together coordinate Mg(2+). Position 414 (serine 414) interacts with substrate.

It belongs to the ketol-acid reductoisomerase family. Requires Mg(2+) as cofactor.

It catalyses the reaction (2R)-2,3-dihydroxy-3-methylbutanoate + NADP(+) = (2S)-2-acetolactate + NADPH + H(+). The enzyme catalyses (2R,3R)-2,3-dihydroxy-3-methylpentanoate + NADP(+) = (S)-2-ethyl-2-hydroxy-3-oxobutanoate + NADPH + H(+). It functions in the pathway amino-acid biosynthesis; L-isoleucine biosynthesis; L-isoleucine from 2-oxobutanoate: step 2/4. The protein operates within amino-acid biosynthesis; L-valine biosynthesis; L-valine from pyruvate: step 2/4. In terms of biological role, involved in the biosynthesis of branched-chain amino acids (BCAA). Catalyzes an alkyl-migration followed by a ketol-acid reduction of (S)-2-acetolactate (S2AL) to yield (R)-2,3-dihydroxy-isovalerate. In the isomerase reaction, S2AL is rearranged via a Mg-dependent methyl migration to produce 3-hydroxy-3-methyl-2-ketobutyrate (HMKB). In the reductase reaction, this 2-ketoacid undergoes a metal-dependent reduction by NADPH to yield (R)-2,3-dihydroxy-isovalerate. This chain is Ketol-acid reductoisomerase (NADP(+)), found in Proteus mirabilis (strain HI4320).